Consider the following 545-residue polypeptide: Phenylalanine--tRNA ligase beta subunit (545 aa).

The region spanning 268 to 343 (FLHKIQNVRE…MSIGYNNLEP (76 aa)) is the B5 domain. Residues D321, D327, E330, and D331 each coordinate Mg(2+).

The protein belongs to the phenylalanyl-tRNA synthetase beta subunit family. Type 2 subfamily. Tetramer of two alpha and two beta subunits. The cofactor is Mg(2+).

The protein localises to the cytoplasm. It carries out the reaction tRNA(Phe) + L-phenylalanine + ATP = L-phenylalanyl-tRNA(Phe) + AMP + diphosphate + H(+). The chain is Phenylalanine--tRNA ligase beta subunit from Saccharolobus islandicus (strain M.16.27) (Sulfolobus islandicus).